An 89-amino-acid chain; its full sequence is Small ribosomal subunit protein bS20 (89 aa).

Positions 1-26 (MANSAQARKRARQADGQRSHNASLRS) are disordered.

Belongs to the bacterial ribosomal protein bS20 family.

Binds directly to 16S ribosomal RNA. In Dechloromonas aromatica (strain RCB), this protein is Small ribosomal subunit protein bS20.